A 361-amino-acid polypeptide reads, in one-letter code: Peptide chain release factor 1 (361 aa).

Gln233 is modified (N5-methylglutamine). Positions 282-310 are disordered; the sequence is SKKQAERAQNRKSQVGSGDRSERIRTYNF.

The protein belongs to the prokaryotic/mitochondrial release factor family. Methylated by PrmC. Methylation increases the termination efficiency of RF1.

It localises to the cytoplasm. Its function is as follows. Peptide chain release factor 1 directs the termination of translation in response to the peptide chain termination codons UAG and UAA. This chain is Peptide chain release factor 1, found in Treponema denticola (strain ATCC 35405 / DSM 14222 / CIP 103919 / JCM 8153 / KCTC 15104).